The following is an 87-amino-acid chain: MGSITASFILITMQILFFCEDSSGEPNFAERNFWHASCSARGVYIDGSMITTLFFYASLLGVCVALISLAYHACFRLFTRSVLRSTW.

A signal peptide spans Met1–Gly24. At Glu25–Ser48 the chain is on the virion surface side. A helical membrane pass occupies residues Met49 to Leu69. The Intravirion segment spans residues Ala70 to Trp87.

It belongs to the herpesviridae glycoprotein N family. In terms of assembly, interacts (via N-terminus) with gM (via N-terminus). The gM-gN heterodimer forms the gCII complex.

The protein localises to the virion membrane. Its subcellular location is the host membrane. It localises to the host Golgi apparatus. It is found in the host trans-Golgi network. Envelope glycoprotein necessary for proper maturation of gM and modulation of its membrane fusion activity. Also plays a critical role in virion morphogenesis. The chain is Envelope glycoprotein N from Varicella-zoster virus (strain Dumas) (HHV-3).